Here is a 252-residue protein sequence, read N- to C-terminus: Phosphate import ATP-binding protein PstB 1 (252 aa).

In terms of domain architecture, ABC transporter spans 6–247 (LQVSDLSVYY…PKHKETEDYI (242 aa)). 38–45 (GPSGSGKS) lines the ATP pocket.

Belongs to the ABC transporter superfamily. Phosphate importer (TC 3.A.1.7) family. The complex is composed of two ATP-binding proteins (PstB), two transmembrane proteins (PstC and PstA) and a solute-binding protein (PstS).

Its subcellular location is the cell membrane. It carries out the reaction phosphate(out) + ATP + H2O = ADP + 2 phosphate(in) + H(+). In terms of biological role, part of the ABC transporter complex PstSACB involved in phosphate import. Responsible for energy coupling to the transport system. This is Phosphate import ATP-binding protein PstB 1 from Streptococcus agalactiae serotype Ia (strain ATCC 27591 / A909 / CDC SS700).